The primary structure comprises 312 residues: Olfactory receptor 6C75 (312 aa).

At 1–23 (MRNSTAVTDFILLGLTSDPQWQV) the chain is on the extracellular side. Residue asparagine 3 is glycosylated (N-linked (GlcNAc...) asparagine). Residues 24–44 (VLFIFLLVTYMLSVTGNLIII) traverse the membrane as a helical segment. Residues 45–63 (TLTLSDPHLQTPMYFFLRN) lie on the Cytoplasmic side of the membrane. A helical membrane pass occupies residues 64–84 (FSFLEISFTSVCIPRFLVTVV). Over 85 to 95 (TGNRTISYNGC) the chain is Extracellular. Cysteine 95 and cysteine 177 are disulfide-bonded. A helical transmembrane segment spans residues 96–116 (VAQLFFFIFLGVTEFYLLAAM). Residues 117-140 (SYDRCMAICKPLHYTIIMSTRVCT) lie on the Cytoplasmic side of the membrane. Residues 141-161 (LLVFSSWLAGFLIIFPPVMLL) form a helical membrane-spanning segment. At 162-194 (LQLDFCASNVIDHFICDSSPMLQLSCTNTHFLE) the chain is on the extracellular side. A helical transmembrane segment spans residues 195 to 215 (LMAFFLAVVTLMVTLTLVILS). The Cytoplasmic segment spans residues 216 to 237 (YTNIIRTILKIPSMSQRKKAFS). The chain crosses the membrane as a helical span at residues 238–258 (TCSSHMIVVSISYSSCIFMYI). At 259–269 (KTSARERVTLS) the chain is on the extracellular side. Residues 270–290 (KGVAVLNTSVAPLLNPFIYTL) traverse the membrane as a helical segment. Topologically, residues 291–312 (RNKQVKQAFKSMVQKMIFSLNK) are cytoplasmic.

The protein belongs to the G-protein coupled receptor 1 family.

The protein resides in the cell membrane. In terms of biological role, odorant receptor. The chain is Olfactory receptor 6C75 (OR6C75) from Homo sapiens (Human).